The sequence spans 359 residues: S-adenosylmethionine:tRNA ribosyltransferase-isomerase (359 aa).

The protein belongs to the QueA family. Monomer.

It localises to the cytoplasm. The catalysed reaction is 7-aminomethyl-7-carbaguanosine(34) in tRNA + S-adenosyl-L-methionine = epoxyqueuosine(34) in tRNA + adenine + L-methionine + 2 H(+). It functions in the pathway tRNA modification; tRNA-queuosine biosynthesis. In terms of biological role, transfers and isomerizes the ribose moiety from AdoMet to the 7-aminomethyl group of 7-deazaguanine (preQ1-tRNA) to give epoxyqueuosine (oQ-tRNA). This Synechococcus sp. (strain ATCC 27144 / PCC 6301 / SAUG 1402/1) (Anacystis nidulans) protein is S-adenosylmethionine:tRNA ribosyltransferase-isomerase.